The following is a 31-amino-acid chain: Photosystem II reaction center protein T (31 aa).

The residue at position 1 (Met-1) is an N-formylmethionine. A helical transmembrane segment spans residues 3–23 (SVAYILVLTMALAVLFFAIAF).

It belongs to the PsbT family. As to quaternary structure, PSII is composed of 1 copy each of membrane proteins PsbA, PsbB, PsbC, PsbD, PsbE, PsbF, PsbH, PsbI, PsbJ, PsbK, PsbL, PsbM, PsbT, PsbX, PsbY, PsbZ, Psb30/Ycf12, peripheral proteins PsbO, CyanoQ (PsbQ), PsbU, PsbV and a large number of cofactors. It forms dimeric complexes.

It localises to the cellular thylakoid membrane. In terms of biological role, found at the monomer-monomer interface of the photosystem II (PS II) dimer, plays a role in assembly and dimerization of PSII. PSII is a light-driven water plastoquinone oxidoreductase, using light energy to abstract electrons from H(2)O, generating a proton gradient subsequently used for ATP formation. This chain is Photosystem II reaction center protein T, found in Synechocystis sp. (strain ATCC 27184 / PCC 6803 / Kazusa).